Consider the following 382-residue polypeptide: Alcohol dehydrogenase 4 (382 aa).

NAD(+)-binding residues include Asp40, Asn72, Gly99, Ser100, Thr139, Thr140, Thr148, Phe150, Lys161, and Gly183. Positions 195, 199, and 264 each coordinate Fe(2+). His268 and His278 together coordinate NAD(+). Fe(2+) is bound at residue His278.

It belongs to the iron-containing alcohol dehydrogenase family. In terms of assembly, homodimer. The cofactor is Zn(2+). Fe(2+) serves as cofactor.

It is found in the mitochondrion. The catalysed reaction is a primary alcohol + NAD(+) = an aldehyde + NADH + H(+). It carries out the reaction ethanol + NAD(+) = acetaldehyde + NADH + H(+). Inhibited by EDTA. In terms of biological role, alcohol dehydrogenase specific for ethanol. Acts mainyl as a mitochondrial formaldehyde dehydrogenase and has no effect on ethanol production. Shows drastically reduced activity towards primary alcohols from 4 carbon atoms upward. Isomers of aliphatic alcohol, as well as secondary alcohols and glycerol are not used at all. The role of ADH4 in yeast metabolism is not yet known, but ADH4 is not responsible for the production of ethanol during growth on glucose nor responsible for the oxidation of ethanol to acetaldehyde. This is Alcohol dehydrogenase 4 from Saccharomyces cerevisiae (strain ATCC 204508 / S288c) (Baker's yeast).